A 311-amino-acid chain; its full sequence is Dof zinc finger protein DOF1.4 (311 aa).

Residues 1–12 (MQSKNMIVASSH) show a composition bias toward polar residues. Residues 1 to 29 (MQSKNMIVASSHQQQQQQQPQQPQPQLKC) are disordered. The segment covering 13-26 (QQQQQQQPQQPQPQ) has biased composition (low complexity). Residues 27-81 (LKCPRCDSSNTKFCYYNNYSLSQPRHFCKACKRYWTRGGTLRNVPVGGSYRKNKR) form a Dof-type zinc finger. Cys-29, Cys-32, Cys-54, and Cys-57 together coordinate Zn(2+). The segment at 72–110 (VGGSYRKNKRVKRPSTATTTTASTVSTTNSSSPNNPHQI) is disordered. A compositionally biased stretch (low complexity) spans 85 to 107 (PSTATTTTASTVSTTNSSSPNNP).

Its subcellular location is the nucleus. Transcription factor that binds specifically to a 5'-AA[AG]G-3' consensus core sequence. This chain is Dof zinc finger protein DOF1.4 (DOF1.4), found in Arabidopsis thaliana (Mouse-ear cress).